The chain runs to 300 residues: Acetylglutamate kinase (300 aa).

Substrate-binding positions include 67–68 (GG), Arg-89, and Asn-194.

The protein belongs to the acetylglutamate kinase family. ArgB subfamily.

It is found in the cytoplasm. It carries out the reaction N-acetyl-L-glutamate + ATP = N-acetyl-L-glutamyl 5-phosphate + ADP. The protein operates within amino-acid biosynthesis; L-arginine biosynthesis; N(2)-acetyl-L-ornithine from L-glutamate: step 2/4. Its function is as follows. Catalyzes the ATP-dependent phosphorylation of N-acetyl-L-glutamate. The chain is Acetylglutamate kinase from Saccharophagus degradans (strain 2-40 / ATCC 43961 / DSM 17024).